Here is a 335-residue protein sequence, read N- to C-terminus: uncharacterized protein (335 aa).

3 Solcar repeats span residues 22–129 (VKPI…LLPL), 134–227 (GFPA…IRLF), and 244–327 (KDLY…TKKY). A run of 6 helical transmembrane segments spans residues 28 to 48 (MLSACVGSVITTLTVTPLDVV), 104 to 123 (GLVPSLTMLLPANTVQFLGY), 133 to 154 (WGFPAAAAIAGASARTISATIV), 195 to 219 (GILNLWSGVSVTLWRDVPFSAFYWW), 246 to 263 (LYINFVSGGISGTLATLL), and 307 to 323 (CVKVAPSCAIMISSYHL).

This sequence belongs to the mitochondrial carrier (TC 2.A.29) family.

The protein resides in the mitochondrion inner membrane. This is an uncharacterized protein from Schizosaccharomyces pombe (strain 972 / ATCC 24843) (Fission yeast).